Reading from the N-terminus, the 196-residue chain is Peroxiredoxin TSA2 (196 aa).

The Thioredoxin domain occupies 3 to 161 (AEVQKQAPPF…ALRLVEGFQW (159 aa)). Lys14 is covalently cross-linked (Glycyl lysine isopeptide (Lys-Gly) (interchain with G-Cter in ubiquitin)). Catalysis depends on Cys48, which acts as the Cysteine sulfenic acid (-SOH) intermediate. Glycyl lysine isopeptide (Lys-Gly) (interchain with G-Cter in ubiquitin) cross-links involve residues Lys89 and Lys132. Phosphothreonine is present on Thr174.

Belongs to the peroxiredoxin family. AhpC/Prx1 subfamily. In terms of assembly, homodimer; disulfide-linked, upon oxidation.

The protein localises to the cytoplasm. It carries out the reaction a hydroperoxide + [thioredoxin]-dithiol = an alcohol + [thioredoxin]-disulfide + H2O. Its function is as follows. Thiol-specific peroxidase that catalyzes the reduction of hydrogen peroxide and organic hydroperoxides to water and alcohols, respectively. Plays a role in cell protection against oxidative stress by detoxifying peroxides and as sensor of hydrogen peroxide-mediated signaling events. Can act alternatively as peroxidase and molecular chaperone. Oxidative stress and heat shock exposure cause a reversible shift of the protein structure from low MW species to high MW complexes, triggering a peroxidase-to-chaperone functional switch. The chaperone function of the protein enhances resistance to heat shock. In Saccharomyces cerevisiae (strain ATCC 204508 / S288c) (Baker's yeast), this protein is Peroxiredoxin TSA2.